Consider the following 540-residue polypeptide: Glucose-6-phosphate isomerase (540 aa).

Glu350 (proton donor) is an active-site residue. Catalysis depends on residues His381 and Lys503.

This sequence belongs to the GPI family.

The protein localises to the cytoplasm. The catalysed reaction is alpha-D-glucose 6-phosphate = beta-D-fructose 6-phosphate. The protein operates within carbohydrate biosynthesis; gluconeogenesis. It participates in carbohydrate degradation; glycolysis; D-glyceraldehyde 3-phosphate and glycerone phosphate from D-glucose: step 2/4. Its function is as follows. Catalyzes the reversible isomerization of glucose-6-phosphate to fructose-6-phosphate. This Burkholderia orbicola (strain AU 1054) protein is Glucose-6-phosphate isomerase.